Reading from the N-terminus, the 308-residue chain is Hydroxyacylglutathione hydrolase, mitochondrial (308 aa).

The N-terminal 13 residues, 1-13, are a transit peptide targeting the mitochondrion; it reads MVLGRGLLGRRSL. Histidine 102, histidine 104, aspartate 106, and histidine 107 together coordinate Zn(2+). The residue at position 116 (lysine 116) is an N6-acetyllysine. Zn(2+)-binding residues include histidine 158 and aspartate 182. Residues 191-193 and 221-223 contribute to the substrate site; these read KFY and HEY. Histidine 221 is a binding site for Zn(2+). N6-acetyllysine; alternate is present on lysine 229. Lysine 229 is modified (N6-succinyllysine; alternate). Residue 297–300 participates in substrate binding; that stretch reads RKEK.

Belongs to the metallo-beta-lactamase superfamily. Glyoxalase II family. As to quaternary structure, monomer. Zn(2+) is required as a cofactor. As to expression, testis.

Its subcellular location is the mitochondrion matrix. It localises to the cytoplasm. The catalysed reaction is an S-(2-hydroxyacyl)glutathione + H2O = a 2-hydroxy carboxylate + glutathione + H(+). It catalyses the reaction (R)-S-lactoylglutathione + H2O = (R)-lactate + glutathione + H(+). It functions in the pathway secondary metabolite metabolism; methylglyoxal degradation; (R)-lactate from methylglyoxal: step 2/2. Its function is as follows. Thiolesterase that catalyzes the hydrolysis of S-D-lactoyl-glutathione to form glutathione and D-lactic acid. The sequence is that of Hydroxyacylglutathione hydrolase, mitochondrial (HAGH) from Macaca fascicularis (Crab-eating macaque).